We begin with the raw amino-acid sequence, 192 residues long: Xanthine phosphoribosyltransferase (192 aa).

Xanthine contacts are provided by L20 and N27. A128 to A132 contacts 5-phospho-alpha-D-ribose 1-diphosphate. K156 lines the xanthine pocket.

This sequence belongs to the purine/pyrimidine phosphoribosyltransferase family. Xpt subfamily. In terms of assembly, homodimer.

The protein localises to the cytoplasm. The enzyme catalyses XMP + diphosphate = xanthine + 5-phospho-alpha-D-ribose 1-diphosphate. It functions in the pathway purine metabolism; XMP biosynthesis via salvage pathway; XMP from xanthine: step 1/1. Its function is as follows. Converts the preformed base xanthine, a product of nucleic acid breakdown, to xanthosine 5'-monophosphate (XMP), so it can be reused for RNA or DNA synthesis. This is Xanthine phosphoribosyltransferase from Listeria innocua serovar 6a (strain ATCC BAA-680 / CLIP 11262).